Here is a 334-residue protein sequence, read N- to C-terminus: Dual specificity mitogen-activated protein kinase kinase 6 (334 aa).

Residues 1–11 (MSQSKGKKRNP) are compositionally biased toward basic residues. Residues 1-34 (MSQSKGKKRNPGLKIPKEAFEQPQTSSTPPRDLD) form a disordered region. The interval 4 to 19 (SKGKKRNPGLKIPKEA) is d domain. A Protein kinase domain is found at 53 to 314 (LEPIVELGRG…YPELMQHPFF (262 aa)). ATP contacts are provided by residues 59–67 (LGRGAYGVV) and Lys-82. The active-site Proton acceptor is the Asp-179. At Ser-207 the chain carries Phosphoserine; by MAPK3. Thr-211 is modified (phosphothreonine; by MAPK3). The segment at 311–334 (HPFFTVHESKAADVASFVKLILGD) is DVD domain.

It belongs to the protein kinase superfamily. STE Ser/Thr protein kinase family. MAP kinase kinase subfamily. Dimer. Interacts (via its D domain) with its substrates MAPK11, MAPK12, MAPK13 and MAPK14. Interacts (via its DVD domain) with MAP3Ks activators like MAP3K5/ASK1, MAP3K1/MEKK1, MAP3K2/MEKK2, MAP3K3/MEKK3, MAP3K4/MEKK4, MAP3K7/TAK1, MAP3K11/MLK3 and MAP3K17/TAOK2. Interacts with DCTN1. Interacts with EIF2AK2/PKR. In terms of processing, weakly autophosphorylated. Phosphorylated at Ser-207 and Thr-211 by the majority of M3Ks, such as MAP3K5/ASK1, MAP3K1/MEKK1, MAP3K2/MEKK2, MAP3K3/MEKK3, MAP3K4/MEKK4, MAP3K7/TAK1, MAP3K11/MLK3 and MAP3K17/TAOK2. Post-translationally, in response to genotoxic stress, MAP3K-phosphorylated MAP2K6 is ubiquitinated and degraded by the SCF(FBXO31) complex.

Its subcellular location is the nucleus. The protein localises to the cytoplasm. It is found in the cytoskeleton. It catalyses the reaction L-seryl-[protein] + ATP = O-phospho-L-seryl-[protein] + ADP + H(+). It carries out the reaction L-threonyl-[protein] + ATP = O-phospho-L-threonyl-[protein] + ADP + H(+). The enzyme catalyses L-tyrosyl-[protein] + ATP = O-phospho-L-tyrosyl-[protein] + ADP + H(+). Activated by dual phosphorylation on Ser-207 and Thr-211 in response to a variety of cellular stresses, including UV radiation, osmotic shock, hypoxia, inflammatory cytokines, interferon gamma (IFNG), and less often by growth factors. MAP2K6/MKK6 is activated by the majority of M3Ks, such as MAP3K5/ASK1, MAP3K1/MEKK1, MAP3K2/MEKK2, MAP3K3/MEKK3, MAP3K4/MEKK4, MAP3K7/TAK1, MAP3K11/MLK3 and MAP3K17/TAOK2. Functionally, dual specificity protein kinase which acts as an essential component of the MAP kinase signal transduction pathway. With MAP3K3/MKK3, catalyzes the concomitant phosphorylation of a threonine and a tyrosine residue in the MAP kinases p38 MAPK11, MAPK12, MAPK13 and MAPK14 and plays an important role in the regulation of cellular responses to cytokines and all kinds of stresses. Especially, MAP2K3/MKK3 and MAP2K6/MKK6 are both essential for the activation of MAPK11 and MAPK13 induced by environmental stress, whereas MAP2K6/MKK6 is the major MAPK11 activator in response to TNF. MAP2K6/MKK6 also phosphorylates and activates PAK6. The p38 MAP kinase signal transduction pathway leads to direct activation of transcription factors. Nuclear targets of p38 MAP kinase include the transcription factors ATF2 and ELK1. Within the p38 MAPK signal transduction pathway, MAP3K6/MKK6 mediates phosphorylation of STAT4 through MAPK14 activation, and is therefore required for STAT4 activation and STAT4-regulated gene expression in response to IL-12 stimulation. The pathway is also crucial for IL-6-induced SOCS3 expression and down-regulation of IL-6-mediated gene induction; and for IFNG-dependent gene transcription. Has a role in osteoclast differentiation through NF-kappa-B transactivation by TNFSF11, and in endochondral ossification and since SOX9 is another likely downstream target of the p38 MAPK pathway. MAP2K6/MKK6 mediates apoptotic cell death in thymocytes. Acts also as a regulator for melanocytes dendricity, through the modulation of Rho family GTPases. This Mus musculus (Mouse) protein is Dual specificity mitogen-activated protein kinase kinase 6 (Map2k6).